We begin with the raw amino-acid sequence, 127 residues long: Glycine cleavage system H protein (127 aa).

Residues 24–105 enclose the Lipoyl-binding domain; sequence TLTVGVTDHA…AYAAWLFKLK (82 aa). At Lys-65 the chain carries N6-lipoyllysine.

Belongs to the GcvH family. As to quaternary structure, the glycine cleavage system is composed of four proteins: P, T, L and H. Requires (R)-lipoate as cofactor.

Functionally, the glycine cleavage system catalyzes the degradation of glycine. The H protein shuttles the methylamine group of glycine from the P protein to the T protein. The protein is Glycine cleavage system H protein of Azoarcus sp. (strain BH72).